The sequence spans 295 residues: ESX-3 secretion-associated protein EspG3 (295 aa).

This sequence belongs to the EspG family. In terms of assembly, interacts specifically with ESX-3-dependent PE/PPE proteins.

It localises to the cytoplasm. Its function is as follows. Specific chaperone for cognate PE/PPE proteins. Plays an important role in preventing aggregation of PE/PPE dimers. The sequence is that of ESX-3 secretion-associated protein EspG3 from Mycobacterium tuberculosis (strain CDC 1551 / Oshkosh).